The primary structure comprises 326 residues: D-alanine--D-alanine ligase (326 aa).

Residues 121–320 (ISVLRPYGIK…LKDLFGSTIE (200 aa)) form the ATP-grasp domain. 149–204 (VDKVGLPCFVKANRAGSSFGVTKVKTEDEIISAAKTAFTEDDEAIIESFLDGTEVS) lines the ATP pocket. Mg(2+) is bound by residues glutamate 275, glutamate 287, and asparagine 289.

This sequence belongs to the D-alanine--D-alanine ligase family. Requires Mg(2+) as cofactor. It depends on Mn(2+) as a cofactor.

The protein resides in the cytoplasm. The catalysed reaction is 2 D-alanine + ATP = D-alanyl-D-alanine + ADP + phosphate + H(+). Its pathway is cell wall biogenesis; peptidoglycan biosynthesis. Its function is as follows. Cell wall formation. This is D-alanine--D-alanine ligase from Christiangramia forsetii (strain DSM 17595 / CGMCC 1.15422 / KT0803) (Gramella forsetii).